The chain runs to 210 residues: Holliday junction resolvase RecU (210 aa).

T93, D95, E108, and Q127 together coordinate Mg(2+).

This sequence belongs to the RecU family. Mg(2+) is required as a cofactor.

It is found in the cytoplasm. The enzyme catalyses Endonucleolytic cleavage at a junction such as a reciprocal single-stranded crossover between two homologous DNA duplexes (Holliday junction).. Endonuclease that resolves Holliday junction intermediates in genetic recombination. Cleaves mobile four-strand junctions by introducing symmetrical nicks in paired strands. Promotes annealing of linear ssDNA with homologous dsDNA. Required for DNA repair, homologous recombination and chromosome segregation. The sequence is that of Holliday junction resolvase RecU from Lactobacillus helveticus (strain DPC 4571).